Consider the following 246-residue polypeptide: tRNA (guanine-N(7)-)-methyltransferase (246 aa).

A disordered region spans residues Met-1 to Ile-26. Glu-75, Glu-100, Asp-127, and Asp-150 together coordinate S-adenosyl-L-methionine. The active site involves Asp-150. Lys-154 is a substrate binding site. The interval Lys-156 to Arg-161 is interaction with RNA. Substrate-binding positions include Asp-186 and Thr-225–Glu-228.

Belongs to the class I-like SAM-binding methyltransferase superfamily. TrmB family.

It catalyses the reaction guanosine(46) in tRNA + S-adenosyl-L-methionine = N(7)-methylguanosine(46) in tRNA + S-adenosyl-L-homocysteine. The protein operates within tRNA modification; N(7)-methylguanine-tRNA biosynthesis. Catalyzes the formation of N(7)-methylguanine at position 46 (m7G46) in tRNA. This Polaromonas sp. (strain JS666 / ATCC BAA-500) protein is tRNA (guanine-N(7)-)-methyltransferase.